The sequence spans 445 residues: Argininosuccinate synthase (445 aa).

Residues 17–25 (AFSGGLDTS) and Ala-43 contribute to the ATP site. Residue Tyr-99 coordinates L-citrulline. 2 residues coordinate ATP: Gly-129 and Thr-131. Positions 131, 135, and 136 each coordinate L-aspartate. Asn-135 serves as a coordination point for L-citrulline. Asp-136 is an ATP binding site. L-citrulline-binding residues include Arg-139 and Ser-192. Asp-194 contacts ATP. The L-citrulline site is built by Thr-201, Glu-203, and Glu-280.

The protein belongs to the argininosuccinate synthase family. Type 2 subfamily. As to quaternary structure, homotetramer.

It localises to the cytoplasm. It catalyses the reaction L-citrulline + L-aspartate + ATP = 2-(N(omega)-L-arginino)succinate + AMP + diphosphate + H(+). It functions in the pathway amino-acid biosynthesis; L-arginine biosynthesis; L-arginine from L-ornithine and carbamoyl phosphate: step 2/3. This chain is Argininosuccinate synthase, found in Rhodopseudomonas palustris (strain BisB18).